The following is a 247-amino-acid chain: MAGHSKWKTIKRAKAATDNKRGALFTRLIREITMAAKLGGGDAGGNPRLRTAIDNAKAVSMPKDNIDRAIKKGTGELEGVDYVEVLYEAYGPGGVAIMIAAVTDNPTRTVADVRHKLSRNHGNMGTINSVAFMFDRKGQMSVAAEGVAEEALMEAALEAGADDVVNDGESFVISTDPGALHATKEGLEGRKYKVENAELAWVPKNTVKVEGENATQLLKLLEALEELDDVQKVDANFEMDDDTMADA.

It belongs to the TACO1 family.

The protein localises to the cytoplasm. This Gemmatimonas aurantiaca (strain DSM 14586 / JCM 11422 / NBRC 100505 / T-27) protein is Probable transcriptional regulatory protein GAU_0635.